Here is a 214-residue protein sequence, read N- to C-terminus: Adenylate kinase (214 aa).

Residue 10–15 (GTGKGT) participates in ATP binding. Residues 30 to 59 (STGDILRENIQKKNTIGKKIHNILKNGELV) form an NMP region. AMP contacts are provided by residues Thr-31, Arg-36, 57-59 (ELV), 85-88 (GFPR), and Gln-92. Residues 122–159 (GRRVHTPSGRIYNINYNPPREEGKDDLTQEKLTIREDD) form an LID region. Residues Arg-123 and 132-133 (IY) contribute to the ATP site. Residues Arg-156 and Arg-167 each contribute to the AMP site. Gln-200 is an ATP binding site.

Belongs to the adenylate kinase family. As to quaternary structure, monomer.

It is found in the cytoplasm. The catalysed reaction is AMP + ATP = 2 ADP. The protein operates within purine metabolism; AMP biosynthesis via salvage pathway; AMP from ADP: step 1/1. Functionally, catalyzes the reversible transfer of the terminal phosphate group between ATP and AMP. Plays an important role in cellular energy homeostasis and in adenine nucleotide metabolism. The sequence is that of Adenylate kinase from Buchnera aphidicola subsp. Schizaphis graminum (strain Sg).